Reading from the N-terminus, the 284-residue chain is MTAQIISGTELAKTIRAELADEVAKLKANGIEPGLAVILVGDDPASHSYVKGKQKACAEVGIRSLLYTFPATISEEELLAKIQELNADPTVHGILVQLPLPAHIREWSVIETIAPEKDVDGFHPINVGKMMIGQPAFLPCTPHGVLVMVKSAGIDIAGKHVVVVGRSNIVGKPVGQLFLREHATVTYAHSKTPDLAAITRQADILIVAVGKARLIGPEHVKPGAVVIDVGVNRLESGKLCGDVDFDAVKEVASYVTPVPGGVGPMTITMLLHNTMEAARQLAAK.

Residues 165–167 (GRS), Ser190, and Val231 each bind NADP(+).

It belongs to the tetrahydrofolate dehydrogenase/cyclohydrolase family. As to quaternary structure, homodimer.

The catalysed reaction is (6R)-5,10-methylene-5,6,7,8-tetrahydrofolate + NADP(+) = (6R)-5,10-methenyltetrahydrofolate + NADPH. It carries out the reaction (6R)-5,10-methenyltetrahydrofolate + H2O = (6R)-10-formyltetrahydrofolate + H(+). It functions in the pathway one-carbon metabolism; tetrahydrofolate interconversion. In terms of biological role, catalyzes the oxidation of 5,10-methylenetetrahydrofolate to 5,10-methenyltetrahydrofolate and then the hydrolysis of 5,10-methenyltetrahydrofolate to 10-formyltetrahydrofolate. This is Bifunctional protein FolD from Geobacillus thermodenitrificans (strain NG80-2).